The chain runs to 397 residues: Phosphoglycerate kinase (397 aa).

Substrate is bound by residues 26-28, Arg42, 65-68, Arg119, and Arg152; these read DLN and HLGR. ATP is bound by residues Lys203, Glu325, and 351-354; that span reads GGDT.

Belongs to the phosphoglycerate kinase family. As to quaternary structure, monomer.

Its subcellular location is the cytoplasm. The catalysed reaction is (2R)-3-phosphoglycerate + ATP = (2R)-3-phospho-glyceroyl phosphate + ADP. It participates in carbohydrate degradation; glycolysis; pyruvate from D-glyceraldehyde 3-phosphate: step 2/5. This Bordetella pertussis (strain Tohama I / ATCC BAA-589 / NCTC 13251) protein is Phosphoglycerate kinase.